We begin with the raw amino-acid sequence, 406 residues long: Argininosuccinate synthase (406 aa).

ATP contacts are provided by residues 13–21 (AYSGGLDTS) and Ala40. Residues Tyr91 and Ser96 each contribute to the L-citrulline site. Gly121 contacts ATP. The L-aspartate site is built by Thr123, Asn127, and Asp128. Asn127 provides a ligand contact to L-citrulline. Residues Arg131, Ser182, Ser191, Glu267, and Tyr279 each contribute to the L-citrulline site.

This sequence belongs to the argininosuccinate synthase family. Type 1 subfamily. Homotetramer.

The protein resides in the cytoplasm. The enzyme catalyses L-citrulline + L-aspartate + ATP = 2-(N(omega)-L-arginino)succinate + AMP + diphosphate + H(+). The protein operates within amino-acid biosynthesis; L-arginine biosynthesis; L-arginine from L-ornithine and carbamoyl phosphate: step 2/3. In Brucella suis biovar 1 (strain 1330), this protein is Argininosuccinate synthase.